The chain runs to 214 residues: Ribonuclease P protein component 3 (214 aa).

The protein belongs to the eukaryotic/archaeal RNase P protein component 3 family. In terms of assembly, consists of a catalytic RNA component and at least 4-5 protein subunits. Forms a subcomplex with Rnp2 which stimulates the catalytic RNA.

Its subcellular location is the cytoplasm. The enzyme catalyses Endonucleolytic cleavage of RNA, removing 5'-extranucleotides from tRNA precursor.. In terms of biological role, part of ribonuclease P, a protein complex that generates mature tRNA molecules by cleaving their 5'-ends. The RNA is catalytic, but its KM for pre-tRNA is 170-fold decreased in the presence of the 4 known protein subunits (Rnp1-4). The protein subunits also decrease the amount of Mg(2+) needed for activity. The chain is Ribonuclease P protein component 3 from Pyrococcus furiosus (strain ATCC 43587 / DSM 3638 / JCM 8422 / Vc1).